The primary structure comprises 116 residues: Ferredoxin-like protein in nif region (116 aa).

One can recognise a 4Fe-4S ferredoxin-type domain in the interval alanine 2–aspartate 29. Cysteine 9, cysteine 12, cysteine 15, and cysteine 19 together coordinate iron-sulfur cluster.

This is Ferredoxin-like protein in nif region (fdxN) from Trichormus azollae (Anabaena azollae).